The sequence spans 629 residues: Tudor and KH domain-containing protein homolog (629 aa).

The chain crosses the membrane as a helical span at residues 9–29 (LPIALGLSLVTVTAFVAYYVL). KH domains lie at 46–109 (INTI…ETLI) and 119–185 (IMSE…KKLV). A disordered region spans residues 198–240 (IEQSKRPPRHSSSPPSPCPSPGDRDADADAQGDVDHTRVKYKR). The segment covering 219–240 (GDRDADADAQGDVDHTRVKYKR) has biased composition (basic and acidic residues). Residues 297–362 (HVSVGQVVAA…CELRADLLRL (66 aa)) form the Tudor domain. The segment at 464-526 (PAPSPRPSPP…GDDSKDKDGI (63 aa)) is disordered.

Belongs to the Tdrkh family. As to quaternary structure, interacts with (symmetrically methylated) Siwi. Interacts with (symmetrically methylated) Ago3. Interacts with PNLDC1/trimmer; interaction takes place on the mitochondrial surface and recruits PNLDC1/trimmer to Siwi-bound pre-piRNAs.

It is found in the mitochondrion outer membrane. Participates in the primary piRNA biogenesis pathway and is required during spermatogenesis to repress transposable elements and prevent their mobilization, which is essential for the germline integrity. The piRNA metabolic process mediates the repression of transposable elements during meiosis by forming complexes composed of piRNAs and Piwi proteins (Siwi or Ago3) and govern the methylation and subsequent repression of transposons. Required for the final steps of primary piRNA biogenesis by participating in the processing of 31-37 nt intermediates into mature piRNAs: acts by recruiting the exonuclease PNLDC1/trimmer to Siwi-bound pre-piRNAs. This is Tudor and KH domain-containing protein homolog from Bombyx mori (Silk moth).